The sequence spans 477 residues: Ribulose bisphosphate carboxylase large chain (477 aa).

The propeptide occupies 1-2; that stretch reads MS. Position 3 is an N-acetylproline (Pro-3). Lys-14 bears the N6,N6,N6-trimethyllysine mark. Residues Asn-123 and Thr-173 each contribute to the substrate site. The active-site Proton acceptor is the Lys-175. Substrate is bound at residue Lys-177. Lys-201, Asp-203, and Glu-204 together coordinate Mg(2+). N6-carboxylysine is present on Lys-201. The Proton acceptor role is filled by His-294. Residues Arg-295, His-327, and Ser-379 each contribute to the substrate site.

This sequence belongs to the RuBisCO large chain family. Type I subfamily. As to quaternary structure, heterohexadecamer of 8 large chains and 8 small chains; disulfide-linked. The disulfide link is formed within the large subunit homodimers. The cofactor is Mg(2+). In terms of processing, the disulfide bond which can form in the large chain dimeric partners within the hexadecamer appears to be associated with oxidative stress and protein turnover.

Its subcellular location is the plastid. The enzyme catalyses 2 (2R)-3-phosphoglycerate + 2 H(+) = D-ribulose 1,5-bisphosphate + CO2 + H2O. The catalysed reaction is D-ribulose 1,5-bisphosphate + O2 = 2-phosphoglycolate + (2R)-3-phosphoglycerate + 2 H(+). RuBisCO catalyzes two reactions: the carboxylation of D-ribulose 1,5-bisphosphate, the primary event in carbon dioxide fixation, as well as the oxidative fragmentation of the pentose substrate in the photorespiration process. Both reactions occur simultaneously and in competition at the same active site. In Lathraea clandestina (Purple toothwort), this protein is Ribulose bisphosphate carboxylase large chain (rbcL).